We begin with the raw amino-acid sequence, 343 residues long: MNRLTLALDVMGGDFGPRVTIPALSLALAQQPMLSFVLFGDQYHAIPLLHSLPAEQQQRIRFVHTSRIVDPHVPVRQALRQSKGSSMRLAIEAVVAGEAQACVSGGNTGVLMGLAKWFVEPLVGIDRPALASLIPALNGQASVMLDLGANVEADSKLLLQFAEMGNIFAQSILSLAQPRLALLNIGTEEVKGRYAIQQAHHVLKNRADLHYIGFIESDKLMNHLADVIVCDGFCGNIALKAVEGVASHFLALFKQPKRSFFVDWLSSWWGRLLYHRVYRALQRVNPERHNGATLLGLSSVVVKSHGSAGVNAYFYAINHAIEQIQNRIPVKISAGLQKLHQNL.

Belongs to the PlsX family. Homodimer. Probably interacts with PlsY.

The protein localises to the cytoplasm. The catalysed reaction is a fatty acyl-[ACP] + phosphate = an acyl phosphate + holo-[ACP]. The protein operates within lipid metabolism; phospholipid metabolism. Its function is as follows. Catalyzes the reversible formation of acyl-phosphate (acyl-PO(4)) from acyl-[acyl-carrier-protein] (acyl-ACP). This enzyme utilizes acyl-ACP as fatty acyl donor, but not acyl-CoA. The protein is Phosphate acyltransferase of Haemophilus ducreyi (strain 35000HP / ATCC 700724).